A 671-amino-acid polypeptide reads, in one-letter code: RNA polymerase sigma factor RpoD (671 aa).

2 disordered regions span residues 1–45 and 229–260; these read MKKK…SKIK and DDDENSVSDSKKDEDNEEDEENEERKKVVSEK. Residues 251–260 show a composition bias toward basic and acidic residues; sequence EERKKVVSEK. A sigma-70 factor domain-2 region spans residues 436–506; it reads MAKSNLRLVV…SRAIADQART (71 aa). The Interaction with polymerase core subunit RpoC motif lies at 460–463; it reads DLIQ. Residues 515 to 591 form a sigma-70 factor domain-3 region; sequence DTINRINKVM…DKNIVSSIDH (77 aa). The tract at residues 604–658 is sigma-70 factor domain-4; it reads VLDQLNEREKAVIRMRFGLLDDESDRTLEEIGKELNVTRERVRQIESSAIKKLRS. The H-T-H motif DNA-binding region spans 631–650; it reads LEEIGKELNVTRERVRQIES.

The protein belongs to the sigma-70 factor family. RpoD/SigA subfamily. Interacts transiently with the RNA polymerase catalytic core.

The protein resides in the cytoplasm. Sigma factors are initiation factors that promote the attachment of RNA polymerase to specific initiation sites and are then released. This sigma factor is the primary sigma factor during exponential growth. This is RNA polymerase sigma factor RpoD from Helicobacter pylori (strain ATCC 700392 / 26695) (Campylobacter pylori).